The sequence spans 126 residues: Adenosine 5'-monophosphoramidase HINT1 (126 aa).

Alanine 2 is modified (N-acetylalanine). Residues 18–126 (IFGKIIRKEI…GGRQMNWPPG (109 aa)) form the HIT domain. Lysine 21 and lysine 30 each carry N6-acetyllysine. AMP is bound at residue 43–44 (DI). Phosphoserine occurs at positions 45 and 72. Residues asparagine 99, 105–107 (GQS), and 112–114 (HLH) contribute to the AMP site. Positions 110–114 (HVHLH) match the Histidine triad motif motif. Histidine 112 functions as the Tele-AMP-histidine intermediate in the catalytic mechanism.

This sequence belongs to the HINT family. Homodimer. Interacts with CDK7. Interacts with RUVBL1 and RUVBL2 and is associated with the LEF1/TCF1-CTNNB1 complex and with a KAT5 histone acetyltransferase complex. Identified in a complex with MITF and CTNNB1. Interacts with CDC34 and RBX1, and is part of a SCF (SKP2-CUL1-F-box protein) E3 ubiquitin-protein ligase complex. Interacts with SUMO1, SUMO2 and RGS17. Interacts with the Ten-1 ICD form of TENM1. Interacts with CALM1; interaction increases in the presence of calcium ions. Widely expressed.

It localises to the cytoplasm. The protein localises to the nucleus. It carries out the reaction adenosine 5'-phosphoramidate + H2O = AMP + NH4(+). Exhibits adenosine 5'-monophosphoramidase activity, hydrolyzing purine nucleotide phosphoramidates with a single phosphate group such as adenosine 5'monophosphoramidate (AMP-NH2) to yield AMP and NH2. Hydrolyzes adenosine 5'monophosphomorpholidate (AMP-morpholidate) and guanosine 5'monophosphomorpholidate (GMP-morpholidate). Hydrolyzes lysyl-AMP (AMP-N-epsilon-(N-alpha-acetyl lysine methyl ester)) generated by lysine tRNA ligase, as well as Met-AMP, His-AMP and Asp-AMP, lysyl-GMP (GMP-N-epsilon-(N-alpha-acetyl lysine methyl ester)) and AMP-N-alanine methyl ester. Can also convert adenosine 5'-O-phosphorothioate and guanosine 5'-O-phosphorothioate to the corresponding nucleoside 5'-O-phosphates with concomitant release of hydrogen sulfide. In addition, functions as a scaffolding protein that modulates transcriptional activation by the LEF1/TCF1-CTNNB1 complex and by the complex formed with MITF and CTNNB1. Modulates p53/TP53 levels and p53/TP53-mediated apoptosis. Modulates proteasomal degradation of target proteins by the SCF (SKP2-CUL1-F-box protein) E3 ubiquitin-protein ligase complex. Also exhibits SUMO-specific isopeptidase activity, deconjugating SUMO1 from RANGAP1 and RGS17. This chain is Adenosine 5'-monophosphoramidase HINT1 (HINT1), found in Bos taurus (Bovine).